The following is a 194-amino-acid chain: uncharacterized protein (194 aa).

The region spanning 6–66 (SGKYEKILQA…AIAENLLTHT (61 aa)) is the HTH tetR-type domain. The segment at residues 29–48 (SISDIVKKAGTAQGTFYLYF) is a DNA-binding region (H-T-H motif).

This is an uncharacterized protein from Bacillus subtilis (strain 168).